The sequence spans 456 residues: Acid sphingomyelinase-like phosphodiesterase 3b (456 aa).

The N-terminal stretch at methionine 1 to alanine 18 is a signal peptide. Aspartate 28 and histidine 30 together coordinate Zn(2+). N-linked (GlcNAc...) asparagine glycosylation occurs at asparagine 34. Residues cysteine 45 and cysteine 64 are joined by a disulfide bond. Residue asparagine 72 is glycosylated (N-linked (GlcNAc...) asparagine). Aspartate 93 serves as a coordination point for Zn(2+). An N-linked (GlcNAc...) asparagine glycan is attached at asparagine 100. Asparagine 134 is a Zn(2+) binding site. Asparagine 164 and asparagine 223 each carry an N-linked (GlcNAc...) asparagine glycan. Residues histidine 236, histidine 277, and histidine 279 each contribute to the Zn(2+) site. 2 cysteine pairs are disulfide-bonded: cysteine 405–cysteine 409 and cysteine 415–cysteine 428.

The protein belongs to the acid sphingomyelinase family. In terms of assembly, interacts with TLR4, TLR7, TLR8 and TLR9. The cofactor is Zn(2+). In terms of processing, N-glycosylated. As to expression, macrophages and dendritic cells.

The protein localises to the secreted. Its subcellular location is the cell membrane. Functionally, lipid-modulating phosphodiesterase. Active on the surface of macrophages and dendritic cells and strongly influences macrophage lipid composition and membrane fluidity. Acts as a negative regulator of Toll-like receptor signaling. Has in vitro phosphodiesterase activity, but the physiological substrate is unknown. Lacks activity with phosphocholine-containing lipids, but can cleave CDP-choline, and can release phosphate from ATP and ADP (in vitro). This chain is Acid sphingomyelinase-like phosphodiesterase 3b (Smpdl3b), found in Mus musculus (Mouse).